Consider the following 67-residue polypeptide: ATP synthase F(0) complex subunit 8 (67 aa).

A helical transmembrane segment spans residues 8–24 (TWFTTILSTSFSIIHRL). Lysine 54 carries the post-translational modification N6-acetyllysine; alternate. An N6-succinyllysine; alternate modification is found at lysine 54. Lysine 57 is modified (N6-acetyllysine).

This sequence belongs to the ATPase protein 8 family. As to quaternary structure, component of the ATP synthase complex composed at least of ATP5F1A/subunit alpha, ATP5F1B/subunit beta, ATP5MC1/subunit c (homooctomer), MT-ATP6/subunit a, MT-ATP8/subunit 8, ATP5ME/subunit e, ATP5MF/subunit f, ATP5MG/subunit g, ATP5MK/subunit k, ATP5MJ/subunit j, ATP5F1C/subunit gamma, ATP5F1D/subunit delta, ATP5F1E/subunit epsilon, ATP5PF/subunit F6, ATP5PB/subunit b, ATP5PD/subunit d, ATP5PO/subunit OSCP. ATP synthase complex consists of a soluble F(1) head domain (subunits alpha(3) and beta(3)) - the catalytic core - and a membrane F(0) domain - the membrane proton channel (subunits c, a, 8, e, f, g, k and j). These two domains are linked by a central stalk (subunits gamma, delta, and epsilon) rotating inside the F1 region and a stationary peripheral stalk (subunits F6, b, d, and OSCP). Interacts with PRICKLE3.

Its subcellular location is the mitochondrion membrane. In terms of biological role, subunit 8, of the mitochondrial membrane ATP synthase complex (F(1)F(0) ATP synthase or Complex V) that produces ATP from ADP in the presence of a proton gradient across the membrane which is generated by electron transport complexes of the respiratory chain. ATP synthase complex consist of a soluble F(1) head domain - the catalytic core - and a membrane F(1) domain - the membrane proton channel. These two domains are linked by a central stalk rotating inside the F(1) region and a stationary peripheral stalk. During catalysis, ATP synthesis in the catalytic domain of F(1) is coupled via a rotary mechanism of the central stalk subunits to proton translocation. In vivo, can only synthesize ATP although its ATP hydrolase activity can be activated artificially in vitro. Part of the complex F(0) domain. The polypeptide is ATP synthase F(0) complex subunit 8 (Glis glis (Fat dormouse)).